We begin with the raw amino-acid sequence, 541 residues long: MAKQILYHESARRALEKGMDILAEAVAVTLGPKGRNVVLEKKFGAPQIVNDGVTIAKEIELEDHIENTGVALIRQAASKTNDVAGDGTTTATVLAYAMVKEGMRNVAAGANPMAIKRGIDRATQKVVETIAAHAKPVEDSRAITQVASISAGNDDEVGKMIADAIEKVGKEGVISLEEGKSTTTELEITEGMRFDKGYISPYFVTDPERMEVIQKDAMFLITDKKITLVQDLVPILEQVARARKPLFIIAEDIEKEALATLVVNKLRGNLNVSAVKAPGFGDRRKAMMQDIAVLTNTQVISEQTGLRLDSIKLDVLGKARQVNITKDYTTVIAEGNEEGVSARCEQIRRQIEETDSAYEKEKLQERLAKLAGGVAVIKVGAATETEMKDKKLRLEDAINATKAAVEEGIVPGGGTTLAHLAIELENWVQSNLEHEELIGGMIVARSLTAPLKRIVENAGQNGAVIAEQVKDKPFNIGYNAANAQFVDMFEAGIVDPAKVTRSGLQNAASIAGMVLTTECIVVDKAESQQKAASVNRNSFDY.

ATP contacts are provided by residues 29-32 (TLGP), 86-90 (DGTTT), Gly-413, 479-481 (NAA), and Asp-495.

This sequence belongs to the chaperonin (HSP60) family. Forms a cylinder of 14 subunits composed of two heptameric rings stacked back-to-back. Interacts with the co-chaperonin GroES.

It localises to the plastid. The protein localises to the cyanelle. It carries out the reaction ATP + H2O + a folded polypeptide = ADP + phosphate + an unfolded polypeptide.. Its function is as follows. Together with its co-chaperonin GroES, plays an essential role in assisting protein folding. The GroEL-GroES system forms a nano-cage that allows encapsulation of the non-native substrate proteins and provides a physical environment optimized to promote and accelerate protein folding. This chain is Chaperonin GroEL, cyanelle, found in Cyanophora paradoxa.